The primary structure comprises 141 residues: MKMTKVLKPSEVQRDWVLIDAEGKTFGRILTEVATLLRGKHKPSFTPNVDCGDYVVIINAEKAKFTGVKLEDKEYFTHSGYFGSTKSKKLGDMLENHTEKLYKLAVRGMLPKTTLGRQMLKKLKVYAGAEHPHTAQINKEA.

The protein belongs to the universal ribosomal protein uL13 family. In terms of assembly, part of the 50S ribosomal subunit.

This protein is one of the early assembly proteins of the 50S ribosomal subunit, although it is not seen to bind rRNA by itself. It is important during the early stages of 50S assembly. In Sulfurovum sp. (strain NBC37-1), this protein is Large ribosomal subunit protein uL13.